The chain runs to 436 residues: Acrosin (436 aa).

Residues Met1–Ala19 form the signal peptide. N-linked (GlcNAc...) asparagine glycosylation occurs at Asn22. Disulfide bonds link Cys25–Cys155, Cys29–Cys163, Cys74–Cys90, Cys178–Cys247, Cys210–Cys226, and Cys237–Cys267. The region spanning Ile43–Gly291 is the Peptidase S1 domain. Active-site charge relay system residues include His89 and Asp143. N-linked (GlcNAc...) asparagine glycosylation occurs at Asn211. Ser241 (charge relay system) is an active-site residue. Residues Pro346–Ser436 constitute a propeptide, pro-rich.

It belongs to the peptidase S1 family. As to quaternary structure, heavy chain (catalytic) and a light chain linked by two disulfide bonds. Forms a heterodimer with SERPINA5.

The catalysed reaction is Preferential cleavage: Arg-|-Xaa, Lys-|-Xaa.. Its activity is regulated as follows. Inhibited by SERPINA5. Acrosin is the major protease of mammalian spermatozoa. It is a serine protease of trypsin-like cleavage specificity, it is synthesized in a zymogen form, proacrosin and stored in the acrosome. This is Acrosin (Acr) from Mus musculus (Mouse).